The sequence spans 353 residues: Photosystem II D2 protein (353 aa).

Threonine 2 carries the post-translational modification N-acetylthreonine. Residue threonine 2 is modified to Phosphothreonine. A helical transmembrane segment spans residues 41-61 (CAYFSLGGWLTGTTFVTSWYT). A chlorophyll a-binding site is contributed by histidine 118. A helical transmembrane segment spans residues 125–141 (GFMLRQFELARSVQLRP). Glutamine 130 and asparagine 143 together coordinate pheophytin a. A helical membrane pass occupies residues 153–166 (VFVSVFLIYPLGQS). Histidine 198 serves as a coordination point for chlorophyll a. Residues 208–228 (AALLCAIHGATVENTLFEDGD) form a helical membrane-spanning segment. 2 residues coordinate a plastoquinone: histidine 215 and phenylalanine 262. A Fe cation-binding site is contributed by histidine 215. Fe cation is bound at residue histidine 269. A helical membrane pass occupies residues 279–295 (GLWMSAIGVVGLALNLR).

It belongs to the reaction center PufL/M/PsbA/D family. In terms of assembly, PSII is composed of 1 copy each of membrane proteins PsbA, PsbB, PsbC, PsbD, PsbE, PsbF, PsbH, PsbI, PsbJ, PsbK, PsbL, PsbM, PsbT, PsbX, PsbY, PsbZ, Psb30/Ycf12, at least 3 peripheral proteins of the oxygen-evolving complex and a large number of cofactors. It forms dimeric complexes. The cofactor is The D1/D2 heterodimer binds P680, chlorophylls that are the primary electron donor of PSII, and subsequent electron acceptors. It shares a non-heme iron and each subunit binds pheophytin, quinone, additional chlorophylls, carotenoids and lipids. There is also a Cl(-1) ion associated with D1 and D2, which is required for oxygen evolution. The PSII complex binds additional chlorophylls, carotenoids and specific lipids..

It localises to the plastid. The protein localises to the chloroplast thylakoid membrane. The enzyme catalyses 2 a plastoquinone + 4 hnu + 2 H2O = 2 a plastoquinol + O2. In terms of biological role, photosystem II (PSII) is a light-driven water:plastoquinone oxidoreductase that uses light energy to abstract electrons from H(2)O, generating O(2) and a proton gradient subsequently used for ATP formation. It consists of a core antenna complex that captures photons, and an electron transfer chain that converts photonic excitation into a charge separation. The D1/D2 (PsbA/PsbD) reaction center heterodimer binds P680, the primary electron donor of PSII as well as several subsequent electron acceptors. D2 is needed for assembly of a stable PSII complex. In Chara vulgaris (Common stonewort), this protein is Photosystem II D2 protein.